The sequence spans 107 residues: Nucleoid-associated protein YaaK (107 aa).

The segment at M1–K24 is disordered. Residues M8–K17 are compositionally biased toward low complexity.

It belongs to the YbaB/EbfC family. Homodimer.

The protein resides in the cytoplasm. The protein localises to the nucleoid. In terms of biological role, binds to DNA and alters its conformation. May be involved in regulation of gene expression, nucleoid organization and DNA protection. This chain is Nucleoid-associated protein YaaK (yaaK), found in Bacillus subtilis (strain 168).